Reading from the N-terminus, the 203-residue chain is Thymidylate kinase (203 aa).

14 to 21 (GGEGIGKS) serves as a coordination point for ATP.

Belongs to the thymidylate kinase family.

It carries out the reaction dTMP + ATP = dTDP + ADP. Its function is as follows. Phosphorylation of dTMP to form dTDP in both de novo and salvage pathways of dTTP synthesis. The polypeptide is Thymidylate kinase (Rickettsia rickettsii (strain Iowa)).